The sequence spans 261 residues: Kallikrein 1-related peptidase b5 (261 aa).

Residues 1-18 (MWFLILFLALSLGGIDAA) form the signal peptide. A propeptide spans 19–24 (PPVQSR) (activation peptide). The Peptidase S1 domain maps to 25–258 (IFGGFNCEKN…FNSWIKDTIA (234 aa)). 5 cysteine pairs are disulfide-bonded: Cys31-Cys173, Cys50-Cys66, Cys152-Cys219, Cys184-Cys198, and Cys209-Cys234. Catalysis depends on His65, which acts as the Charge relay system. N-linked (GlcNAc...) asparagine glycosylation occurs at Asn102. The active-site Charge relay system is Asp120. Ser213 (charge relay system) is an active-site residue.

It belongs to the peptidase S1 family. Kallikrein subfamily.

It carries out the reaction Preferential cleavage of Arg-|-Xaa bonds in small molecule substrates. Highly selective action to release kallidin (lysyl-bradykinin) from kininogen involves hydrolysis of Met-|-Xaa or Leu-|-Xaa.. Functionally, glandular kallikreins cleave Met-Lys and Arg-Ser bonds in kininogen to release Lys-bradykinin. This chain is Kallikrein 1-related peptidase b5 (Klk1b5), found in Mus musculus (Mouse).